The sequence spans 209 residues: Uracil phosphoribosyltransferase (209 aa).

Residues Arg79, Arg104, and 131 to 139 (DPMLATGAS) contribute to the 5-phospho-alpha-D-ribose 1-diphosphate site. Residues Ile194 and 199 to 201 (GDA) contribute to the uracil site. Residue Asp200 participates in 5-phospho-alpha-D-ribose 1-diphosphate binding.

This sequence belongs to the UPRTase family. Requires Mg(2+) as cofactor.

It catalyses the reaction UMP + diphosphate = 5-phospho-alpha-D-ribose 1-diphosphate + uracil. Its pathway is pyrimidine metabolism; UMP biosynthesis via salvage pathway; UMP from uracil: step 1/1. Its activity is regulated as follows. Allosterically activated by GTP. Its function is as follows. Catalyzes the conversion of uracil and 5-phospho-alpha-D-ribose 1-diphosphate (PRPP) to UMP and diphosphate. In Staphylococcus haemolyticus (strain JCSC1435), this protein is Uracil phosphoribosyltransferase.